The following is a 362-amino-acid chain: Chromobox protein homolog 8 (362 aa).

A Chromo domain is found at 11-69 (FAAEALLKRRIRKGRMEYLVKWKGWSQKYSTWEPEENILDARLLAAFEEREREMELYGP). Residues 90 to 100 (KTYEFRSDSTR) are compositionally biased toward basic and acidic residues. The tract at residues 90–197 (KTYEFRSDST…LGEPSAGLGE (108 aa)) is disordered. S110 is subject to Phosphoserine. Residues 142-162 (DPPRDRDRERDRGTSRVDDKP) are compositionally biased toward basic and acidic residues. 2 positions are modified to phosphoserine: S164 and S229. Phosphotyrosine is present on Y234. Phosphoserine is present on residues S238, S284, S305, and S325.

Component of a PRC1-like complex. Interacts with RING1, RNF2, PCGF1, PCGF2, PCGF3, BMI1, PCGF5, PCGF6 and PHC2. Interacts with histone H3. Interacts with MLLT3. Interacts with PHC2. Interacts (via chromodomain) with single-stranded RNA.

It is found in the nucleus. Its subcellular location is the chromosome. Component of a Polycomb group (PcG) multiprotein PRC1-like complex, a complex class required to maintain the transcriptionally repressive state of many genes, including Hox genes, throughout development. PcG PRC1 complex acts via chromatin remodeling and modification of histones; it mediates monoubiquitination of histone H2A 'Lys-119', rendering chromatin heritably changed in its expressibility. This is Chromobox protein homolog 8 (Cbx8) from Mus musculus (Mouse).